The chain runs to 603 residues: ATP-dependent RNA helicase MRH4, mitochondrial (603 aa).

A mitochondrion-targeting transit peptide spans 1–71 (MISTGLPLFT…GNGAGAGARV (71 aa)). The Q motif signature appears at 151–158 (VIKPTPVQ). A Helicase ATP-binding domain is found at 193–409 (KNEEQKTKIF…LRLFPDQKSL (217 aa)). 206 to 213 (AETGSGKT) lines the ATP pocket. Positions 357 to 360 (DEAD) match the DEAD box motif. The 161-residue stretch at 443–603 (CLAQAIYAIS…SAIMKGSRIG (161 aa)) folds into the Helicase C-terminal domain.

Belongs to the DEAD box helicase family. MRH4 subfamily.

It is found in the mitochondrion. The catalysed reaction is ATP + H2O = ADP + phosphate + H(+). Its function is as follows. ATP-binding RNA helicase involved in mitochondrial RNA metabolism. Required for maintenance of mitochondrial DNA. The polypeptide is ATP-dependent RNA helicase MRH4, mitochondrial (MRH4) (Lodderomyces elongisporus (strain ATCC 11503 / CBS 2605 / JCM 1781 / NBRC 1676 / NRRL YB-4239) (Yeast)).